A 506-amino-acid polypeptide reads, in one-letter code: Kynurenine 3-monooxygenase (506 aa).

Belongs to the aromatic-ring hydroxylase family. KMO subfamily. Requires FAD as cofactor.

It localises to the mitochondrion outer membrane. The enzyme catalyses L-kynurenine + NADPH + O2 + H(+) = 3-hydroxy-L-kynurenine + NADP(+) + H2O. It participates in cofactor biosynthesis; NAD(+) biosynthesis; quinolinate from L-kynurenine: step 1/3. Catalyzes the hydroxylation of L-kynurenine (L-Kyn) to form 3-hydroxy-L-kynurenine (L-3OHKyn). Required for synthesis of quinolinic acid. This Emericella nidulans (strain FGSC A4 / ATCC 38163 / CBS 112.46 / NRRL 194 / M139) (Aspergillus nidulans) protein is Kynurenine 3-monooxygenase (bna4).